We begin with the raw amino-acid sequence, 136 residues long: Membrane-bound negative regulator YvrL (136 aa).

Transmembrane regions (helical) follow at residues Leu-18–Leu-38, Ala-46–Phe-66, Leu-83–Thr-103, and Leu-106–Ile-126.

The protein resides in the cell membrane. Functionally, negatively regulates RNA polymerase sigma factor SigO-dependent transcription. Prevents the expression or secretion of OxdC under nonstress conditions. May act as an anti-sigma factor. The polypeptide is Membrane-bound negative regulator YvrL (yvrL) (Bacillus subtilis (strain 168)).